Here is a 244-residue protein sequence, read N- to C-terminus: Protein DCG1 (244 aa).

This sequence belongs to the HyuE racemase family.

The sequence is that of Protein DCG1 (DCG1) from Saccharomyces cerevisiae (strain ATCC 204508 / S288c) (Baker's yeast).